Reading from the N-terminus, the 153-residue chain is MLLRDLVLRHGCCWPSLLLHCALHPLWGLVQVTHAEPQKSCSKVTDSCQHICQCRPPPPLPPPPPPPPPPRLLSAPAPNSTSCPAEDSWWSGLVIIVAVVCASLVFLTVLVIICYKAIKRKPLRKDENGASVAEYPMSSSPSNKGVDVNAAVV.

A signal peptide spans M1–A35. The Extracellular portion of the chain corresponds to E36–G92. The PRAD domain occupies P56–P70. Residues P59–R71 show a composition bias toward pro residues. The segment at P59–N79 is disordered. A glycan (N-linked (GlcNAc...) asparagine) is linked at N79. A helical membrane pass occupies residues L93 to I113. The Cytoplasmic segment spans residues C114–V153. The segment at A133–V153 is disordered.

In terms of assembly, interacts with ACHE, probably through disulfide bonds. Isoforms 1 and 2 are expressed in the adult brain. In matured cortical neurons, only isoform 1 is detectable.

The protein resides in the cell membrane. It localises to the cell junction. The protein localises to the synapse. Its function is as follows. Required to anchor acetylcholinesterase (ACHE) to the basal lamina of the neuromuscular junction and to the membrane of neuronal synapses in brain. Organizes ACHE into tetramers. The sequence is that of Proline-rich membrane anchor 1 (Prima1) from Rattus norvegicus (Rat).